The chain runs to 427 residues: Acyltransferase fer5 (427 aa).

Positions 1-24 (MTAATSVQPSPAPRQPGLRATFNP) are disordered. Substrate is bound at residue His-342. Glu-380 functions as the Proton acceptor in the catalytic mechanism.

The protein belongs to the lysine N-acyltransferase mbtK family.

Its pathway is siderophore biosynthesis. Functionally, acyltransferase; part of the gene cluster that mediates the biosynthesis of siderophore ferrichrome A which is contributing to organismal virulence. The first step of ferrichrome A biosynthesis is performed by the HMG-CoA synthase hcs1 which catalyzes the generation of HMG-CoA and CoA using acetoacetyl-CoA and acetyl-CoA as substrates. The enoyl-CoA isomerase/hydratase fer4 then catalyzes the conversion of hcs1-produced HMG-CoA to methylglutaconyl-CoA. The acyltransferase fer5 then fuses the fer4-generated methylglutaconyl-CoA with sid1-generated hydroxyornithine to yield methylglutaconyl hydroxyornithine. Methylglutaconyl hydroxyornithine is then available for use by the NRPS fer3 to generate ferrichrome A. This chain is Acyltransferase fer5, found in Mycosarcoma maydis (Corn smut fungus).